A 98-amino-acid polypeptide reads, in one-letter code: Cell cycle protein GpsB (98 aa).

The stretch at 34–71 (LDIVIKDYEAFQQELDELRQENARLKRQVEELQKRPTT) forms a coiled coil.

The protein belongs to the GpsB family. Forms polymers through the coiled coil domains. Interacts with PBP1, MreC and EzrA.

It is found in the cytoplasm. Functionally, divisome component that associates with the complex late in its assembly, after the Z-ring is formed, and is dependent on DivIC and PBP2B for its recruitment to the divisome. Together with EzrA, is a key component of the system that regulates PBP1 localization during cell cycle progression. Its main role could be the removal of PBP1 from the cell pole after pole maturation is completed. Also contributes to the recruitment of PBP1 to the division complex. Not essential for septum formation. This chain is Cell cycle protein GpsB, found in Geobacillus thermodenitrificans (strain NG80-2).